The sequence spans 182 residues: UPF0397 protein SPT_0523 (182 aa).

5 helical membrane-spanning segments follow: residues 10–30 (VVAVGIGAALFVVIGMINIPT), 46–66 (LLSIIFGPIIGLLVGLIGHAI), 73–93 (YGLWWTWIIASGLFGLVVGLF), 109–129 (ILIFNLIQLLANALVWGVLAP), and 148–168 (IVAGIANGVSVAIAGTLLLLA).

The protein belongs to the UPF0397 family.

It localises to the cell membrane. This is UPF0397 protein SPT_0523 from Streptococcus pneumoniae (strain Taiwan19F-14).